The following is a 455-amino-acid chain: Glutamate-1-semialdehyde 2,1-aminomutase (455 aa).

N6-(pyridoxal phosphate)lysine is present on lysine 286.

It belongs to the class-III pyridoxal-phosphate-dependent aminotransferase family. HemL subfamily. As to quaternary structure, homodimer. It depends on pyridoxal 5'-phosphate as a cofactor.

The protein resides in the cytoplasm. The enzyme catalyses (S)-4-amino-5-oxopentanoate = 5-aminolevulinate. Its pathway is porphyrin-containing compound metabolism; protoporphyrin-IX biosynthesis; 5-aminolevulinate from L-glutamyl-tRNA(Glu): step 2/2. In Clavibacter sepedonicus (Clavibacter michiganensis subsp. sepedonicus), this protein is Glutamate-1-semialdehyde 2,1-aminomutase.